A 683-amino-acid polypeptide reads, in one-letter code: MADQLNMNGLNLNGGEPRSYIPPHMRGKMGGPAPAGPPANLNGSAWAPQGNGYANGPRPAGGDSWANAPDFTPRGNGAPRGGNNWNPSGPPSFNKNAYGNPAAGAGGPGGAGGAGGAGGGAGQARGGGDGQWRDGKHIAGPANARVERELFGIADDPTKQQTGINFEKYDDIPVEASGQDVPEPVLKFTNPPLDDHLIKNIELAHYKVPTPVQKYSIPIVMGGRDLMACAQTGSGKTGGFLFPILSQAFQTGPSPVPANAAGSFGRTRKAYPTSLILAPTRELVSQIYDESRKFAYRSWVRPCVVYGGADIGSQLRQMERGCDLLVATPGRLVDLIERGRISLQNIKYLVLDEADRMLDMGFEPQIRRIVEGEDMPGVQNRQTLMFSATFPRDIQMLARDFLKDYVFLSVGRVGSTSENITQKVEYVEDIDKRSVLLDILHTHGAGLTLIFVETKRMADSLSDFLINQNFPATSIHGDRTQRERERALEMFRNGRCPILVATAVAARGLDIPNVKHVVNYDLPTDIDDYVHRIGRTGRAGNTGISTAFFNRGNRGVCRDLIELLKEANQEIPSFLENIAREGGGFGGGRGGRSGGRGRGGGANRDFRKFGGGGGGGFNGGGGFGGPPASGGYGGGGGGFGGPPAPSSYGPPPGQYGGGGGGYGGGNGGGYGNPSAGGGGQSWW.

Composition is skewed to low complexity over residues 1-15 (MADQLNMNGLNLNGG) and 73-87 (PRGNGAPRGGNNWNP). The tract at residues 1–137 (MADQLNMNGL…GDGQWRDGKH (137 aa)) is disordered. Over residues 104–130 (GAGGPGGAGGAGGAGGGAGQARGGGDG) the composition is skewed to gly residues. Residues 186-214 (LKFTNPPLDDHLIKNIELAHYKVPTPVQK) carry the Q motif motif. One can recognise a Helicase ATP-binding domain in the interval 217–408 (IPIVMGGRDL…RDFLKDYVFL (192 aa)). 230–237 (AQTGSGKT) contributes to the ATP binding site. A DEAD box motif is present at residues 352 to 355 (DEAD). Residues 419–579 (NITQKVEYVE…EIPSFLENIA (161 aa)) form the Helicase C-terminal domain. Gly residues-rich tracts occupy residues 582 to 602 (GGGFGGGRGGRSGGRGRGGGA) and 609 to 641 (FGGGGGGGFNGGGGFGGPPASGGYGGGGGGFGG). Positions 582 to 683 (GGGFGGGRGG…SAGGGGQSWW (102 aa)) are disordered. Residues 642–653 (PPAPSSYGPPPG) show a composition bias toward pro residues. Positions 654-683 (QYGGGGGGYGGGNGGGYGNPSAGGGGQSWW) are enriched in gly residues.

This sequence belongs to the DEAD box helicase family. DDX3/DED1 subfamily.

The protein localises to the cytoplasm. It carries out the reaction ATP + H2O = ADP + phosphate + H(+). In terms of biological role, ATP-binding RNA helicase involved in translation initiation. Remodels RNA in response to ADP and ATP concentrations by facilitating disruption, but also formation of RNA duplexes. The chain is ATP-dependent RNA helicase ded1 (ded1) from Botryotinia fuckeliana (strain B05.10) (Noble rot fungus).